The sequence spans 346 residues: Methionine import ATP-binding protein MetN 1 (346 aa).

One can recognise an ABC transporter domain in the interval 2 to 241; sequence IELKNVSKVF…PQHVTTKKFV (240 aa). 38-45 is a binding site for ATP; that stretch reads GYSGAGKS.

It belongs to the ABC transporter superfamily. Methionine importer (TC 3.A.1.24) family. As to quaternary structure, the complex is composed of two ATP-binding proteins (MetN), two transmembrane proteins (MetI) and a solute-binding protein (MetQ).

It localises to the cell membrane. The catalysed reaction is L-methionine(out) + ATP + H2O = L-methionine(in) + ADP + phosphate + H(+). The enzyme catalyses D-methionine(out) + ATP + H2O = D-methionine(in) + ADP + phosphate + H(+). Functionally, part of the ABC transporter complex MetNIQ involved in methionine import. Responsible for energy coupling to the transport system. The chain is Methionine import ATP-binding protein MetN 1 from Bacillus cereus (strain ATCC 14579 / DSM 31 / CCUG 7414 / JCM 2152 / NBRC 15305 / NCIMB 9373 / NCTC 2599 / NRRL B-3711).